A 130-amino-acid chain; its full sequence is Small ribosomal subunit protein eS17 (130 aa).

The span at 74–84 (QEEERERRDNY) shows a compositional bias: basic and acidic residues. Positions 74-97 (QEEERERRDNYMPEISTVDPSQLT) are disordered.

Belongs to the eukaryotic ribosomal protein eS17 family.

The chain is Small ribosomal subunit protein eS17 (rps-17) from Caenorhabditis elegans.